The primary structure comprises 176 residues: Mitochondrial inner membrane protein Mpv17 (176 aa).

4 helical membrane passes run 18 to 38, 53 to 73, 94 to 114, and 131 to 151; these read VQVL…QQLV, TMAS…YRVL, GGFA…LNGL, and LITN…LVPL.

The protein belongs to the peroxisomal membrane protein PXMP2/4 family.

Its subcellular location is the mitochondrion inner membrane. In terms of biological role, non-selective channel that modulates the membrane potential under normal conditions and oxidative stress, and is involved in mitochondrial homeostasis. Involved in mitochondrial deoxynucleoside triphosphates (dNTP) pool homeostasis and mitochondrial DNA (mtDNA) maintenance. May be involved in the regulation of reactive oxygen species metabolism and the control of oxidative phosphorylation. The sequence is that of Mitochondrial inner membrane protein Mpv17 from Bos taurus (Bovine).